We begin with the raw amino-acid sequence, 188 residues long: dCTP deaminase (188 aa).

Position 109 to 114 (109 to 114 (KSTYAR)) interacts with dCTP. Glu-135 acts as the Proton donor/acceptor in catalysis. Gln-154, Tyr-168, and Gln-178 together coordinate dCTP.

The protein belongs to the dCTP deaminase family. In terms of assembly, homotrimer.

It carries out the reaction dCTP + H2O + H(+) = dUTP + NH4(+). Its pathway is pyrimidine metabolism; dUMP biosynthesis; dUMP from dCTP (dUTP route): step 1/2. Its function is as follows. Catalyzes the deamination of dCTP to dUTP. The polypeptide is dCTP deaminase (Helicobacter pylori (strain Shi470)).